The following is a 363-amino-acid chain: tRNA dimethylallyltransferase (363 aa).

The tract at residues 1–55 (MLACNDDTSLYLLVKQVTKKEIYSNDLENGNVKRGASMQSLYLIGDPKCCRNNSS) is unknown insert. 65-72 (GPTASGKS) contacts ATP. 67-72 (TASGKS) provides a ligand contact to substrate. 2 interaction with substrate tRNA regions span residues 90–93 (DSMQ) and 214–218 (QRLIR).

This sequence belongs to the IPP transferase family. Monomer. Mg(2+) serves as cofactor.

It carries out the reaction adenosine(37) in tRNA + dimethylallyl diphosphate = N(6)-dimethylallyladenosine(37) in tRNA + diphosphate. Its function is as follows. Catalyzes the transfer of a dimethylallyl group onto the adenine at position 37 in tRNAs that read codons beginning with uridine, leading to the formation of N6-(dimethylallyl)adenosine (i(6)A). This chain is tRNA dimethylallyltransferase, found in Rickettsia conorii (strain ATCC VR-613 / Malish 7).